The sequence spans 1331 residues: NPC1-like intracellular cholesterol transporter 1 (1331 aa).

Positions 1 to 20 are cleaved as a signal peptide; that stretch reads MAAAWLGWLLWALLLSAAQG. At 21 to 282 the chain is on the extracellular side; sequence ELYTPKHEAG…RPSFYMGRMP (262 aa). 9 cysteine pairs are disulfide-bonded: C32–C90, C38–C56, C77–C125, C91–C129, C113–C254, C116–C172, C189–C197, C243–C259, and C256–C263. N-linked (GlcNAc...) asparagine glycans are attached at residues N53 and N85. N-linked (GlcNAc...) asparagine glycosylation occurs at N138. The N-linked (GlcNAc...) asparagine glycan is linked to N244. A helical membrane pass occupies residues 283–303; the sequence is GWLALIIIFTAVFVLLSAVLV. Residues 304–352 are Cytoplasmic-facing; it reads RLRVVSNRNKNKAEGPQEAPKLPHKHKLSPHTILGRFFQNWGTRVASWP. Residues 353 to 373 traverse the membrane as a helical segment; it reads LTVLALSFIVVIALAAGLTFI. The Extracellular portion of the chain corresponds to 374–632; sequence ELTTDPVELW…DEINRTTIQD (259 aa). N-linked (GlcNAc...) asparagine glycosylation is found at N416, N431, N464, N479, N497, and N506. A disulfide bridge links C471 with C485. A disulfide bond links C525 and C542. 2 N-linked (GlcNAc...) asparagine glycosylation sites follow: N606 and N626. In terms of domain architecture, SSD spans 632–797; that stretch reads DLPVFAVSYI…MTAFVALLSL (166 aa). The chain crosses the membrane as a helical span at residues 633 to 653; sequence LPVFAVSYIIVFLYISLALGS. The Cytoplasmic portion of the chain corresponds to 654 to 665; sequence YSRCSRVAVESK. The chain crosses the membrane as a helical span at residues 666-686; sequence ATLGLGGVIVVLGAVLAAMGF. Topologically, residues 687–696 are extracellular; it reads YSYLGVPSSL. A helical transmembrane segment spans residues 697-717; sequence VIIQVVPFLVLAVGADNIFIF. Residues 718–742 lie on the Cytoplasmic side of the membrane; it reads VLEYQRLPRMPGEQREAHIGRTLGS. The chain crosses the membrane as a helical span at residues 743–763; the sequence is VAPSMLLCSLSEAICFFLGAL. The Extracellular segment spans residues 764 to 776; it reads TPMPAVRTFALTS. A helical transmembrane segment spans residues 777-797; that stretch reads GLAIILDFLLQMTAFVALLSL. At 798–846 the chain is on the cytoplasmic side; sequence DSKRQEASRPDVLCCFSTRKLPPPKEKEGLLLRFFRKIYAPFLLHRFIR. Residues 847-867 traverse the membrane as a helical segment; it reads PVVMLLFLTLFGANLYLMCNI. The Extracellular segment spans residues 868 to 1113; that stretch reads NVGLDQELAL…QQYLTVLPEG (246 aa). N-linked (GlcNAc...) asparagine glycans are attached at residues N909 and N917. Disulfide bonds link C920-C925, C967-C1025, and C981-C990. Residues N996, N1038, and N1076 are each glycosylated (N-linked (GlcNAc...) asparagine). The helical transmembrane segment at 1114–1134 threads the bilayer; sequence IFTLALCFVPTFVVCYLLLGL. At 1135 to 1142 the chain is on the cytoplasmic side; the sequence is DMCSGILN. Residues 1143–1163 traverse the membrane as a helical segment; that stretch reads LLSIIMILVDTIGLMAVWGIS. Residues 1164–1165 lie on the Extracellular side of the membrane; it reads YN. Residues 1166-1186 traverse the membrane as a helical segment; it reads AVSLINLVTAVGMSVEFVSHI. Residues 1187 to 1206 are Cytoplasmic-facing; sequence TRSFAVSTKPTRLERAKDAT. Residues 1207–1227 traverse the membrane as a helical segment; the sequence is VFMGSAVFAGVAMTNFPGILI. At 1228-1242 the chain is on the extracellular side; that stretch reads LGFAQAQLIQIFFFR. Residues 1243 to 1263 form a helical membrane-spanning segment; it reads LNLLITLLGLLHGLVFLPVVL. At 1264-1331 the chain is on the cytoplasmic side; that stretch reads SYLGPDVNQA…SSLPKSDQKF (68 aa).

The protein belongs to the patched family. As to quaternary structure, interacts with RAB11A, MYO5B and RAB11FIP2. Interaction with RAB11A, MYO5B and RAB11FIP2 is required for proper transport to the plasma membrane upon cholesterol depletion. Interacts with NPC2. Interacts with LIMA1. In terms of processing, highly glycosylated. As to expression, small intestine showed the highest level of expression. Expression in other tissues including gall bladder, liver, testis and stomach is also observed. Along the duodenum-ileum axis, the levels vary in different segments of the intestine with peak expression in the proximal jejunum. Protein expression is confined to the enterocyte. Discrete localization to the epithelial layer bordering the luminal space along the crypt-villus axis. Protein expression in the enterocyte is observed closest to the luminal space. Expression in enterocytes from the proximal (jejunum) but not in the distal (ileum) region.

It localises to the apical cell membrane. It is found in the cell membrane. It catalyses the reaction cholesterol(in) = cholesterol(out). The catalysed reaction is sitosterol(out) = sitosterol(in). Plays a major role in cholesterol homeostasis. Critical for the uptake of cholesterol across the plasma membrane of the intestinal enterocyte. Involved in plant sterol absorption, it transports sitosterol, although at lower rates than cholesterol. Is the direct molecular target of ezetimibe, a drug that inhibits cholesterol absorption and is approved for the treatment of hypercholesterolemia. May have a function in the transport of multiple lipids and their homeostasis, thereby influencing lipid metabolism regulation. May be involved in caveolin trafficking from the plasma membrane. Acts as a negative regulator of NPC2 and down-regulates its expression and secretion by inhibiting its maturation and accelerating its degradation. The polypeptide is NPC1-like intracellular cholesterol transporter 1 (Rattus norvegicus (Rat)).